The primary structure comprises 203 residues: Ribonuclease HII (203 aa).

Residues 18–203 (GHYAGVDEVG…SFRPVREALA (186 aa)) enclose the RNase H type-2 domain. A divalent metal cation is bound by residues D24, E25, and D116.

This sequence belongs to the RNase HII family. The cofactor is Mn(2+). Mg(2+) is required as a cofactor.

The protein resides in the cytoplasm. It carries out the reaction Endonucleolytic cleavage to 5'-phosphomonoester.. Endonuclease that specifically degrades the RNA of RNA-DNA hybrids. In Shewanella halifaxensis (strain HAW-EB4), this protein is Ribonuclease HII.